Consider the following 396-residue polypeptide: Corticosteroid-binding globulin (396 aa).

Positions 1–22 are cleaved as a signal peptide; sequence MSLALYTCLLWLCTSGLWTAQA. N-linked (GlcNAc...) asparagine glycosylation is found at asparagine 88 and asparagine 216. Glutamine 246 serves as a coordination point for cortisol. Asparagine 252 carries N-linked (GlcNAc...) asparagine glycosylation. Residue aspartate 278 coordinates cortisol. N-linked (GlcNAc...) asparagine glycosylation is found at asparagine 319 and asparagine 352. Residue tryptophan 384 participates in cortisol binding.

This sequence belongs to the serpin family. As to expression, expressed by the liver; secreted in plasma.

It localises to the secreted. Major transport protein for glucocorticoids and progestins in the blood of almost all vertebrate species. This Rattus norvegicus (Rat) protein is Corticosteroid-binding globulin (Serpina6).